The following is a 573-amino-acid chain: Proline--tRNA ligase (573 aa).

The protein belongs to the class-II aminoacyl-tRNA synthetase family. ProS type 1 subfamily. As to quaternary structure, homodimer.

Its subcellular location is the cytoplasm. The catalysed reaction is tRNA(Pro) + L-proline + ATP = L-prolyl-tRNA(Pro) + AMP + diphosphate. Its function is as follows. Catalyzes the attachment of proline to tRNA(Pro) in a two-step reaction: proline is first activated by ATP to form Pro-AMP and then transferred to the acceptor end of tRNA(Pro). As ProRS can inadvertently accommodate and process non-cognate amino acids such as alanine and cysteine, to avoid such errors it has two additional distinct editing activities against alanine. One activity is designated as 'pretransfer' editing and involves the tRNA(Pro)-independent hydrolysis of activated Ala-AMP. The other activity is designated 'posttransfer' editing and involves deacylation of mischarged Ala-tRNA(Pro). The misacylated Cys-tRNA(Pro) is not edited by ProRS. The polypeptide is Proline--tRNA ligase (Caldanaerobacter subterraneus subsp. tengcongensis (strain DSM 15242 / JCM 11007 / NBRC 100824 / MB4) (Thermoanaerobacter tengcongensis)).